Consider the following 471-residue polypeptide: MAPKKKGTKKESKKDAVATGDIEGASVEELNQKIGTLEKEKNKEEEYRNYMQLERDKINAFWEITKKDLEDRRAELRNKDREMEEMEERHQVEIKVYKQKVKHLLYEHQNNITTLKSDGELALKLQQDEYRKREGDLGKDKRNLKLELKEQELAHQDIIRQLKLEHAKEITKLRQEFEQQAKDLQSKYEKKMKMLRDDMELRRKQEIHEIEERKNTHINELMKKHERAFAEIKNYYNDITHNNLDLIKTLKEDVAEMKRREAANEKLMYEIAQDNKKLSEPLSRALKEVELLRQQLANYDKDKLSLAQTKARLLNAERQIKNLEWENEVLSQRFSKVQTERDELYGKFEASIYDVQQKTGLKSALLEKKVEALGEALEMKEAQLAEVLTAANLDPGTLAAINQRLEEVLDNKNQIIKALQYDVAKVSKAHNDLIRVYEAKLTEFGIPVDELGFRPLVTNTSTGPAGLVVGA.

Positions 1-24 are disordered; that stretch reads MAPKKKGTKKESKKDAVATGDIEG. Coiled-coil stretches lie at residues 23 to 239 and 282 to 425; these read EGAS…YNDI and LSRA…DVAK.

The protein belongs to the DRC4 family. Component of the nexin-dynein regulatory complex (N-DRC). Interacts with DRC1, DRC2 and DRC5.

It localises to the cytoplasm. It is found in the cytoskeleton. Its subcellular location is the flagellum axoneme. The protein localises to the flagellum basal body. In terms of biological role, component of the nexin-dynein regulatory complex (N-DRC), a key regulator of ciliary/flagellar motility which maintains the alignment and integrity of the distal axoneme and regulates microtubule sliding in motile axonemes. Plays an important role in the assembly of the N-DRC linker. This is Dynein regulatory complex subunit 4 from Chlamydomonas reinhardtii (Chlamydomonas smithii).